Consider the following 236-residue polypeptide: Dense granule protein 7 (236 aa).

Residues 1–26 (MARHAIFSALCVLGLVAAALPQFATA) form the signal peptide. A disordered region spans residues 45-106 (DGQAPVDSLR…EVHFRKRGVR (62 aa)). A compositionally biased stretch (polar residues) spans 70–80 (TTSMDKASVES). A required for dimerization, interactions with liposomes and liposome tubulation region spans residues 147–236 (AVGMGASYFA…SGEDGEDARQ (90 aa)). A helical membrane pass occupies residues 181–201 (VGTVLGFAALAAAAAFLGMGL). The tract at residues 208–236 (FSPRKNRSRQPALEQEVPESGEDGEDARQ) is disordered. Asn-213 carries an N-linked (GlcNAc...) asparagine glycan. Residues 223 to 236 (EVPESGEDGEDARQ) are compositionally biased toward acidic residues.

Belongs to the Gra7 family. Homodimer. Can form higher order homooligomers in a lipid-stimulated manner. Component of a complex at least composed of ROP18, GRA7 and ROP2. Interacts with ROP5. Interacts with ROP18 in the absence of ROP5. Interacts with mouse IRGA6/IIGP1 in GTP-dependent manner; the interaction results in faster turnover of the GTP-activated IRGA6/IIGP1 oligomer. Interacts with mouse TRAF6 (via N-terminal RING domain); the interaction plays a role in GRA7-induced pro-inflammatory cytokine production in mouse macrophages.

It localises to the secreted. The protein resides in the parasitophorous vacuole lumen. Its subcellular location is the parasitophorous vacuole membrane. The protein localises to the cytoplasm. It is found in the host cytoplasm. It localises to the cytoplasmic vesicle. The protein resides in the secretory vesicle. Its function is as follows. Binds lipid bilayers, sequesters host endocytic organelles in the parasitophorous vacuole space, and causes their deformation and remodeling. Plays a role in nutrient acquisition from the host. In complex with ROP18, targets immunity-related GTPases (IRGs) to prevent IRG-mediated parasite killing by mouse cells. Important component within a kinase complex, contributing to phosphorylation of mouse IRGA6/IIGP1, an immunity-related GTPase that protects mice from infection by certain intracellular pathogens, by Toxoplasma gondii ROP5 and ROP18. Induces pro-inflammatory cytokine production in host macrophages. Activates host pro-inflammatory signaling pathways in a MyD88-dependent manner. Triggers generation of reactive oxygen species (ROS) in host cells. Activates MAPK pathway in host cells. Activates host NF-kappa-B signaling pathway by interacting with TRAF6 and modulating the 'Lys-63'-linked polyubiquitination of TRAF6. This is Dense granule protein 7 from Toxoplasma gondii.